Here is a 245-residue protein sequence, read N- to C-terminus: Derlin-1 (245 aa).

The Cytoplasmic segment spans residues 1–5 (MDLEN). A helical transmembrane segment spans residues 6–26 (FLLGIPIVTRYWFLASTIIPL). At 27–57 (LGRFGFINVQWMFLQWDLVVNKFQFWRPLTA) the chain is on the lumenal side. A helical transmembrane segment spans residues 58-78 (LIYYPVTPQTGFHWLMMCYFL). Over 79 to 100 (YNYSKALESETYRGRSADYLFM) the chain is Cytoplasmic. The chain crosses the membrane as a helical span at residues 101–121 (LIFNWFFCSGLCMALDIYFLL). At 122–166 (EPMVISVLYVWCQVNKDTIVSFWFGMRFPARYLPWVLWGFNAVLR) the chain is on the lumenal side. A helical membrane pass occupies residues 167-187 (GGGTNELVGILVGHAYFFVAL). At 188–245 (KYPDEYGVDLISTPEFLHRLIPDEDGGIHGQDGNIRGARQQPRGHQWPGGVGARLGGN) the chain is on the cytoplasmic side. Residues 218 to 245 (QDGNIRGARQQPRGHQWPGGVGARLGGN) form a disordered region. Residues 234-245 (WPGGVGARLGGN) show a composition bias toward gly residues.

Belongs to the derlin family.

Its subcellular location is the endoplasmic reticulum membrane. In terms of biological role, specifically required for the degradation process of misfolded endoplasmic reticulum (ER) luminal proteins. Participates in the transfer of misfolded proteins from the ER to the cytosol, where they are destroyed by the proteasome in a ubiquitin-dependent manner. The sequence is that of Derlin-1 from Caenorhabditis elegans.